Reading from the N-terminus, the 371-residue chain is Interstrand DNA cross-link repair glycosylase (371 aa).

The short motif at 37–39 is the QXQ; important for activity element; it reads QAQ.

It belongs to the DNA glycosylase AlkZ-like family.

In terms of biological role, DNA glycosylase involved in the repair of interstrand DNA cross-links (ICLs), which are highly toxic DNA lesions that covalently tether the opposing strands of DNA, thereby inhibiting essential cellular processes such as DNA replication and transcription. Acts by unhooking both sides of the ICLs, forming abasic (AP) sites on both strands. AlkZ specifically repairs DNA damage induced by azinomycin B (AZB), a natural product with potent antibiotic and antitumor activities that interacts covalently with duplex DNA and forms ICLs. AlkZ thus confers self-resistance to azinomycin B, which is produced by S.sahachiroi. It may also protect target sites by protein-DNA interaction. Binds sequence non-specifically to native DNA and structure-specifically to azinomycin B-modified sites, with higher affinity to azinomycin B-modified sites and lower affinity to native DNA duplex. In vitro, also acts on monoadducts and can catalyze the excision of N7-methylguanine (7mGua) from an oligonucleotide containing N7-methyldeoxyguanosine (d7mG). Is a monofunctional DNA glycosylase that does not have lyase activity. This Streptomyces sahachiroi protein is Interstrand DNA cross-link repair glycosylase.